A 159-amino-acid polypeptide reads, in one-letter code: Ribosomal RNA large subunit methyltransferase H (159 aa).

S-adenosyl-L-methionine is bound by residues Leu-76, Gly-108, and 127 to 132 (FGLLTL).

The protein belongs to the RNA methyltransferase RlmH family. In terms of assembly, homodimer.

It localises to the cytoplasm. It catalyses the reaction pseudouridine(1915) in 23S rRNA + S-adenosyl-L-methionine = N(3)-methylpseudouridine(1915) in 23S rRNA + S-adenosyl-L-homocysteine + H(+). Its function is as follows. Specifically methylates the pseudouridine at position 1915 (m3Psi1915) in 23S rRNA. In Streptococcus pyogenes serotype M18 (strain MGAS8232), this protein is Ribosomal RNA large subunit methyltransferase H.